The following is a 412-amino-acid chain: Serine hydroxymethyltransferase (412 aa).

(6S)-5,6,7,8-tetrahydrofolate is bound by residues L117 and 121 to 123 (GHL). An N6-(pyridoxal phosphate)lysine modification is found at K226. (6S)-5,6,7,8-tetrahydrofolate-binding positions include E242 and 350–352 (SPF).

The protein belongs to the SHMT family. In terms of assembly, homodimer. Requires pyridoxal 5'-phosphate as cofactor.

It localises to the cytoplasm. The catalysed reaction is (6R)-5,10-methylene-5,6,7,8-tetrahydrofolate + glycine + H2O = (6S)-5,6,7,8-tetrahydrofolate + L-serine. The protein operates within one-carbon metabolism; tetrahydrofolate interconversion. Its pathway is amino-acid biosynthesis; glycine biosynthesis; glycine from L-serine: step 1/1. Catalyzes the reversible interconversion of serine and glycine with tetrahydrofolate (THF) serving as the one-carbon carrier. Also exhibits THF-independent aldolase activity toward beta-hydroxyamino acids, producing glycine and aldehydes, via a retro-aldol mechanism. In Methanosarcina acetivorans (strain ATCC 35395 / DSM 2834 / JCM 12185 / C2A), this protein is Serine hydroxymethyltransferase.